The chain runs to 694 residues: Polyribonucleotide nucleotidyltransferase (694 aa).

Mg(2+) is bound by residues Asp485 and Asp491. The 60-residue stretch at 552-611 (PRIETMQIKPNKIATVIGPGGKQIRQIIEEAGVQIDINDSGLVSISASSPQAIEKAKSMI) folds into the KH domain. The 69-residue stretch at 621-689 (GKIYEGRVTS…EKGQYKLSHK (69 aa)) folds into the S1 motif domain.

Belongs to the polyribonucleotide nucleotidyltransferase family. It depends on Mg(2+) as a cofactor.

The protein resides in the cytoplasm. The enzyme catalyses RNA(n+1) + phosphate = RNA(n) + a ribonucleoside 5'-diphosphate. In terms of biological role, involved in mRNA degradation. Catalyzes the phosphorolysis of single-stranded polyribonucleotides processively in the 3'- to 5'-direction. The sequence is that of Polyribonucleotide nucleotidyltransferase from Chlamydia caviae (strain ATCC VR-813 / DSM 19441 / 03DC25 / GPIC) (Chlamydophila caviae).